A 212-amino-acid chain; its full sequence is 2,3-bisphosphoglycerate-dependent phosphoglycerate mutase (212 aa).

Substrate contacts are provided by residues 9 to 16 (RHGQSEWN), 22 to 23 (TG), arginine 61, 88 to 91 (ERDY), lysine 99, 115 to 116 (RR), and 159 to 160 (GN). Residue histidine 10 is the Tele-phosphohistidine intermediate of the active site. Glutamate 88 acts as the Proton donor/acceptor in catalysis.

The protein belongs to the phosphoglycerate mutase family. BPG-dependent PGAM subfamily. Homodimer.

The enzyme catalyses (2R)-2-phosphoglycerate = (2R)-3-phosphoglycerate. The protein operates within carbohydrate degradation; glycolysis; pyruvate from D-glyceraldehyde 3-phosphate: step 3/5. Functionally, catalyzes the interconversion of 2-phosphoglycerate and 3-phosphoglycerate. The chain is 2,3-bisphosphoglycerate-dependent phosphoglycerate mutase from Methylobacterium radiotolerans (strain ATCC 27329 / DSM 1819 / JCM 2831 / NBRC 15690 / NCIMB 10815 / 0-1).